The chain runs to 75 residues: Small ribosomal subunit protein bS18 (75 aa).

Belongs to the bacterial ribosomal protein bS18 family. Part of the 30S ribosomal subunit. Forms a tight heterodimer with protein bS6.

Functionally, binds as a heterodimer with protein bS6 to the central domain of the 16S rRNA, where it helps stabilize the platform of the 30S subunit. This chain is Small ribosomal subunit protein bS18, found in Thermotoga maritima (strain ATCC 43589 / DSM 3109 / JCM 10099 / NBRC 100826 / MSB8).